The following is a 325-amino-acid chain: Transaldolase (325 aa).

Residue Lys125 is the Schiff-base intermediate with substrate of the active site.

This sequence belongs to the transaldolase family. Type 2 subfamily.

The protein resides in the cytoplasm. It carries out the reaction D-sedoheptulose 7-phosphate + D-glyceraldehyde 3-phosphate = D-erythrose 4-phosphate + beta-D-fructose 6-phosphate. It participates in carbohydrate degradation; pentose phosphate pathway; D-glyceraldehyde 3-phosphate and beta-D-fructose 6-phosphate from D-ribose 5-phosphate and D-xylulose 5-phosphate (non-oxidative stage): step 2/3. Functionally, transaldolase is important for the balance of metabolites in the pentose-phosphate pathway. The polypeptide is Transaldolase (Campylobacter jejuni subsp. jejuni serotype O:23/36 (strain 81-176)).